The following is an 813-amino-acid chain: Leucine--tRNA ligase (813 aa).

The short motif at 39 to 49 (PYPSGRIHMGH) is the 'HIGH' region element. The short motif at 582–586 (KMSKS) is the 'KMSKS' region element. K585 contacts ATP.

Belongs to the class-I aminoacyl-tRNA synthetase family.

It is found in the cytoplasm. The catalysed reaction is tRNA(Leu) + L-leucine + ATP = L-leucyl-tRNA(Leu) + AMP + diphosphate. The chain is Leucine--tRNA ligase from Campylobacter hominis (strain ATCC BAA-381 / DSM 21671 / CCUG 45161 / LMG 19568 / NCTC 13146 / CH001A).